A 722-amino-acid polypeptide reads, in one-letter code: Polyribonucleotide nucleotidyltransferase (722 aa).

The Mg(2+) site is built by Asp-495 and Asp-501. The region spanning 562–621 is the KH domain; sequence PRLLSFRIDPELIGTVIGPGGRTIKGITERTNTKIDIEDGGIVTIASHDGVAAEEAQKII. Positions 631-699 constitute an S1 motif domain; that stretch reads GEVFTGSITR…NRGRINLTLR (69 aa).

It belongs to the polyribonucleotide nucleotidyltransferase family. Mg(2+) serves as cofactor.

It is found in the cytoplasm. The catalysed reaction is RNA(n+1) + phosphate = RNA(n) + a ribonucleoside 5'-diphosphate. In terms of biological role, involved in mRNA degradation. Catalyzes the phosphorolysis of single-stranded polyribonucleotides processively in the 3'- to 5'-direction. The polypeptide is Polyribonucleotide nucleotidyltransferase (Prochlorococcus marinus (strain SARG / CCMP1375 / SS120)).